A 371-amino-acid polypeptide reads, in one-letter code: Cytochrome b (371 aa).

Transmembrane regions (helical) follow at residues 25-45 (FGSMLLSCLFLQTTTGFFLAI), 69-90 (WIMQNTHAISASAFFICIYIHI), 105-125 (WLTGVALLTTLMATAFFGYVL), and 170-190 (FFALHFILPFLIISLSSIHII). Heme b is bound by residues histidine 75 and histidine 89. Heme b is bound by residues histidine 174 and histidine 188. Histidine 193 contacts a ubiquinone. A run of 4 helical transmembrane segments spans residues 218 to 238 (YKDLLMFITLMTMLLLTLSFM), 280 to 300 (LGGALALTMSIIILTTAPFTH), 312 to 332 (LAQTLFWTLIATFITITWAAT), and 339 to 358 (FLLISQTTAILYFSFFIMNP).

This sequence belongs to the cytochrome b family. The cytochrome bc1 complex contains 3 respiratory subunits (MT-CYB, CYC1 and UQCRFS1), 2 core proteins (UQCRC1 and UQCRC2) and probably 6 low-molecular weight proteins. Heme b is required as a cofactor.

It is found in the mitochondrion inner membrane. Component of the ubiquinol-cytochrome c reductase complex (complex III or cytochrome b-c1 complex) that is part of the mitochondrial respiratory chain. The b-c1 complex mediates electron transfer from ubiquinol to cytochrome c. Contributes to the generation of a proton gradient across the mitochondrial membrane that is then used for ATP synthesis. This Laticauda colubrina (Yellow-lipped sea krait) protein is Cytochrome b (MT-CYB).